Here is a 69-residue protein sequence, read N- to C-terminus: Disintegrin VLO5B (69 aa).

Residues M1–E66 enclose the Disintegrin domain. 4 cysteine pairs are disulfide-bonded: C7-C30, C21-C27, C26-C51, and C39-C58. The Cell attachment site; atypical (MLD) signature appears at M43–D45.

Belongs to the disintegrin family. Dimeric disintegrin subfamily. As to quaternary structure, heterodimer with VLO5A; disulfide-linked. As to expression, expressed by the venom gland.

Its subcellular location is the secreted. Its function is as follows. Poor inhibitor of platelet aggregation. The disintegrin inhibits the adhesion of the alpha-4/beta-1 (ITGA4/ITGB1) integrin to VCAM-1. Inhibition on alpha-2b/beta-3 (ITGA2B/ITGB3) is low. The protein is Disintegrin VLO5B of Macrovipera lebetina obtusa (Levant blunt-nosed viper).